The following is a 124-amino-acid chain: Small ribosomal subunit protein uS12 (124 aa).

Asp89 is subject to 3-methylthioaspartic acid. Lys108 is modified (N6-acetyllysine).

Belongs to the universal ribosomal protein uS12 family. Part of the 30S ribosomal subunit. Contacts proteins S8 and S17. May interact with IF1 in the 30S initiation complex.

With S4 and S5 plays an important role in translational accuracy. Its function is as follows. Interacts with and stabilizes bases of the 16S rRNA that are involved in tRNA selection in the A site and with the mRNA backbone. Located at the interface of the 30S and 50S subunits, it traverses the body of the 30S subunit contacting proteins on the other side and probably holding the rRNA structure together. The combined cluster of proteins S8, S12 and S17 appears to hold together the shoulder and platform of the 30S subunit. This Escherichia coli O139:H28 (strain E24377A / ETEC) protein is Small ribosomal subunit protein uS12.